Here is a 310-residue protein sequence, read N- to C-terminus: Haloalkane dehalogenase (310 aa).

The 111-residue stretch at 30–140 (PVVLFLHGNP…PMPTWQDFHH (111 aa)) folds into the AB hydrolase-1 domain. Asp103 (nucleophile) is an active-site residue. Residue Glu127 is the Proton donor of the active site. His280 acts as the Proton acceptor in catalysis.

Belongs to the haloalkane dehalogenase family. Type 2 subfamily. As to quaternary structure, monomer.

It catalyses the reaction 1-haloalkane + H2O = a halide anion + a primary alcohol + H(+). Catalyzes hydrolytic cleavage of carbon-halogen bonds in halogenated aliphatic compounds, leading to the formation of the corresponding primary alcohols, halide ions and protons. The chain is Haloalkane dehalogenase from Bradyrhizobium diazoefficiens (strain JCM 10833 / BCRC 13528 / IAM 13628 / NBRC 14792 / USDA 110).